Consider the following 59-residue polypeptide: Photosystem II reaction center protein K (59 aa).

Positions 1–22 (MILYSHLSTLIDIDLSNNIFLA) are excised as a propeptide. A helical transmembrane segment spans residues 30 to 50 (IFDPLVDVMPVIPVFFLLLAF).

This sequence belongs to the PsbK family. In terms of assembly, PSII is composed of 1 copy each of membrane proteins PsbA, PsbB, PsbC, PsbD, PsbE, PsbF, PsbH, PsbI, PsbJ, PsbK, PsbL, PsbM, PsbT, PsbX, PsbY, PsbZ, Psb30/Ycf12, at least 3 peripheral proteins of the oxygen-evolving complex and a large number of cofactors. It forms dimeric complexes.

The protein resides in the plastid. Its subcellular location is the chloroplast thylakoid membrane. Functionally, one of the components of the core complex of photosystem II (PSII). PSII is a light-driven water:plastoquinone oxidoreductase that uses light energy to abstract electrons from H(2)O, generating O(2) and a proton gradient subsequently used for ATP formation. It consists of a core antenna complex that captures photons, and an electron transfer chain that converts photonic excitation into a charge separation. The chain is Photosystem II reaction center protein K from Chara vulgaris (Common stonewort).